Here is a 228-residue protein sequence, read N- to C-terminus: Superoxide dismutase [Mn], mitochondrial (228 aa).

The transit peptide at 1 to 24 (MALRTLVSRRTLATGLGFRQQLRG) directs the protein to the mitochondrion. Residues His-52, His-100, Asp-189, and His-193 each contribute to the Mn(2+) site.

Belongs to the iron/manganese superoxide dismutase family. In terms of assembly, homotetramer. Mn(2+) is required as a cofactor.

The protein localises to the mitochondrion matrix. The enzyme catalyses 2 superoxide + 2 H(+) = H2O2 + O2. Destroys superoxide anion radicals which are normally produced within the cells and which are toxic to biological systems. The polypeptide is Superoxide dismutase [Mn], mitochondrial (SODA) (Nicotiana plumbaginifolia (Leadwort-leaved tobacco)).